A 355-amino-acid polypeptide reads, in one-letter code: Mu-like prophage FluMu I protein (355 aa).

The protein belongs to the peptidase U35 family.

In terms of biological role, potential protease involved in virion morphogenesis. In Haemophilus influenzae (strain ATCC 51907 / DSM 11121 / KW20 / Rd), this protein is Mu-like prophage FluMu I protein.